A 127-amino-acid chain; its full sequence is Aspartate 1-decarboxylase (127 aa).

The Schiff-base intermediate with substrate; via pyruvic acid role is filled by Ser25. Ser25 carries the post-translational modification Pyruvic acid (Ser). Thr57 contributes to the substrate binding site. Catalysis depends on Tyr58, which acts as the Proton donor. 73–75 (GSA) is a substrate binding site.

It belongs to the PanD family. As to quaternary structure, heterooctamer of four alpha and four beta subunits. It depends on pyruvate as a cofactor. Is synthesized initially as an inactive proenzyme, which is activated by self-cleavage at a specific serine bond to produce a beta-subunit with a hydroxyl group at its C-terminus and an alpha-subunit with a pyruvoyl group at its N-terminus.

It is found in the cytoplasm. The catalysed reaction is L-aspartate + H(+) = beta-alanine + CO2. The protein operates within cofactor biosynthesis; (R)-pantothenate biosynthesis; beta-alanine from L-aspartate: step 1/1. In terms of biological role, catalyzes the pyruvoyl-dependent decarboxylation of aspartate to produce beta-alanine. The chain is Aspartate 1-decarboxylase from Polaromonas naphthalenivorans (strain CJ2).